The primary structure comprises 227 residues: PKHD-type hydroxylase Patl_2273 (227 aa).

Residues 78–178 (KIYPPKFNRY…RTASFFWIES (101 aa)) enclose the Fe2OG dioxygenase domain. Positions 96, 98, and 159 each coordinate Fe cation. Arginine 169 contributes to the 2-oxoglutarate binding site.

It depends on Fe(2+) as a cofactor. Requires L-ascorbate as cofactor.

The protein is PKHD-type hydroxylase Patl_2273 of Pseudoalteromonas atlantica (strain T6c / ATCC BAA-1087).